The primary structure comprises 64 residues: Large ribosomal subunit protein bL32 (64 aa).

A disordered region spans residues 1–64 (MAVQQNRKTR…APKHGDETEE (64 aa)). Residues 7–16 (RKTRSKRGMR) show a composition bias toward basic residues.

It belongs to the bacterial ribosomal protein bL32 family.

The protein is Large ribosomal subunit protein bL32 of Methylococcus capsulatus (strain ATCC 33009 / NCIMB 11132 / Bath).